The primary structure comprises 213 residues: Orotate phosphoribosyltransferase (213 aa).

Residue lysine 26 participates in 5-phospho-alpha-D-ribose 1-diphosphate binding. 34-35 is an orotate binding site; it reads FF. Residues 72–73, arginine 99, lysine 100, lysine 103, histidine 105, and 124–132 contribute to the 5-phospho-alpha-D-ribose 1-diphosphate site; these read YK and DDVITAGTA. Residues threonine 128 and arginine 156 each coordinate orotate.

The protein belongs to the purine/pyrimidine phosphoribosyltransferase family. PyrE subfamily. Homodimer. It depends on Mg(2+) as a cofactor.

The enzyme catalyses orotidine 5'-phosphate + diphosphate = orotate + 5-phospho-alpha-D-ribose 1-diphosphate. It participates in pyrimidine metabolism; UMP biosynthesis via de novo pathway; UMP from orotate: step 1/2. In terms of biological role, catalyzes the transfer of a ribosyl phosphate group from 5-phosphoribose 1-diphosphate to orotate, leading to the formation of orotidine monophosphate (OMP). This chain is Orotate phosphoribosyltransferase, found in Vibrio cholerae serotype O1 (strain ATCC 39315 / El Tor Inaba N16961).